A 968-amino-acid polypeptide reads, in one-letter code: Dynein axonemal intermediate chain 3 (968 aa).

Positions 1–33 (MKDTSSKRPKSKEANKKKTKDKSNADNLPKPEE) are enriched in basic and acidic residues. Disordered regions lie at residues 1–39 (MKDT…ASEP) and 136–166 (KPPA…PEPQ). Residues 141 to 157 (GADEQMEDEEQQEEEEE) are compositionally biased toward acidic residues. 3 WD repeats span residues 407-447 (ECPD…DRLQ), 480-536 (GHKA…VMVH), and 712-753 (VYSK…RQPS). Residues 830–857 (LHTHTDQLRVLEERVREAKQNLLAVSDR) adopt a coiled-coil conformation. Residues 897 to 919 (KRQSDHQKKKKETEAEQQKKKTE) are compositionally biased toward basic and acidic residues. The tract at residues 897–930 (KRQSDHQKKKKETEAEQQKKKTELVTPPKQEEEV) is disordered.

Part of the multisubunit axonemal dynein complex formed at least of two heavy chains and a number of intermediate and light chains.

The protein localises to the cytoplasm. Functionally, may be involved in the regulation of cilia function. The protein is Dynein axonemal intermediate chain 3 (dnai3) of Danio rerio (Zebrafish).